The sequence spans 187 residues: Sodium/potassium ATPase inhibitor SPAI-2 (187 aa).

Positions 1 to 21 are cleaved as a signal peptide; that stretch reads MRSRSFLVLVAVFLICETLVA. Residue Gln-22 is modified to Pyrrolidone carboxylic acid. The propeptide occupies 22-126; the sequence is QRLDRIRGPK…NAQLPDKVQD (105 aa). Positions 28 to 98 are disordered; that stretch reads RGPKGQGQDP…QDPVKAELPD (71 aa). A run of 14 repeats spans residues 34-39, 40-45, 46-51, 58-63, 64-69, 70-75, 76-81, 82-87, 88-93, 100-105, 106-111, 112-117, 118-123, and 124-129. The segment at 34–129 is 14 X 6 AA approximate tandem repeats; sequence GQDPVEGQDQ…LPDKVQDPVK (96 aa). An SVP-1 clotting 1 repeat occupies 64–85; the sequence is GQDPVKGQDPVKGQDPVKGQDL. The 49-residue stretch at 139-187 folds into the WAP domain; sequence LLSKRGHCPRILFRCPLSNPSNKCWRDYDCPGVKKCCEGFCGKDCLYPK. Disulfide bonds link Cys-146/Cys-175, Cys-153/Cys-179, Cys-162/Cys-174, and Cys-168/Cys-183.

The short form (AA 127-187) may be an artifact due to the strongly acidic conditions of the duodenum. The pro-SPAI form may be the native form. As to expression, small intestine &gt; large intestine. The plasma contains the pro-SPAI form circulating.

Its function is as follows. Inhibits Na(+),K(+) ATPase by the competitive mode against Na(+). The polypeptide is Sodium/potassium ATPase inhibitor SPAI-2 (Sus scrofa (Pig)).